The sequence spans 276 residues: TIMELESS-interacting protein (276 aa).

The interval 1–54 (MLEQEENGLFEIPDYEHVEDETFPPFPPPGSPERDPAEAEPDEGSGAPVPVPPK) is disordered. An interaction with TIMELESS region spans residues 64–140 (LDATRLTSER…KEVQTCLKRI (77 aa)). Positions 217 to 243 (SNSQSLENDVTVEESSTGENQEESNGL) are enriched in polar residues. The disordered stretch occupies residues 217–276 (SNSQSLENDVTVEESSTGENQEESNGLISADGPHDVPSASTQEEGQLEAEETQLDHPNLD). At Ser219 the chain carries Phosphoserine. A Phosphothreonine modification is found at Thr233.

The protein belongs to the CSM3 family. Interacts with TIMELESS, which impairs TIMELESS self-association (via N-terminus). Associates with the MCM2-7 complex. Interacts with RPA2, PRDX2.

Its subcellular location is the cytoplasm. It localises to the nucleus. In terms of biological role, plays an important role in the control of DNA replication and the maintenance of replication fork stability. Important for cell survival after DNA damage or replication stress. May be specifically required for the ATR-CHEK1 pathway in the replication checkpoint induced by hydroxyurea or ultraviolet light. Forms a complex with TIMELESS and this complex regulates DNA replication processes under both normal and stress conditions, stabilizes replication forks and influences both CHEK1 phosphorylation and the intra-S phase checkpoint in response to genotoxic stress. The polypeptide is TIMELESS-interacting protein (Tipin) (Rattus norvegicus (Rat)).